A 44-amino-acid chain; its full sequence is Protein PsbN (44 aa).

The chain crosses the membrane as a helical span at residues 6 to 26; the sequence is FFFTFFLWFLLLSATGYSIYV.

The protein belongs to the PsbN family.

The protein resides in the plastid. It localises to the chloroplast thylakoid membrane. May play a role in photosystem I and II biogenesis. The protein is Protein PsbN of Tetradesmus obliquus (Green alga).